The chain runs to 663 residues: Probable methylenetetrahydrofolate reductase (NADPH) (663 aa).

Glu-76 (proton donor/acceptor) is an active-site residue. NAD(+)-binding positions include 76–81 and 107–108; these read EFFPPR and TW. Thr-107 carries the post-translational modification Phosphothreonine. FAD is bound by residues 107-108, His-141, 171-173, 187-188, Tyr-210, 214-217, Asp-223, and Lys-230; these read TW, RGD, RA, and HPQA. Asp-173 serves as a coordination point for substrate. Substrate-binding residues include Gln-241, Tyr-334, and Arg-338. Ser-408 is modified (phosphoserine). At Thr-465 the chain carries Phosphothreonine. S-adenosyl-L-methionine is bound by residues 477–480, 497–501, Thr-578, and Thr-591; these read QPET and TVNSQ.

It belongs to the methylenetetrahydrofolate reductase family. It depends on FAD as a cofactor.

The catalysed reaction is (6S)-5-methyl-5,6,7,8-tetrahydrofolate + NADP(+) = (6R)-5,10-methylene-5,6,7,8-tetrahydrofolate + NADPH + H(+). Its pathway is one-carbon metabolism; tetrahydrofolate interconversion. The protein is Probable methylenetetrahydrofolate reductase (NADPH) of Caenorhabditis elegans.